The primary structure comprises 391 residues: Multidrug resistance protein MdtL (391 aa).

12 consecutive transmembrane segments (helical) span residues 4–24 (FLIC…MYLV), 42–62 (IAFS…GKVA), 69–89 (PVAI…SLAE), 93–113 (LFLA…VVAF), 131–151 (LLNG…HLIM), 158–178 (SLFW…LFIL), 203–222 (FFLS…LTFV), 245–265 (ALTA…LGIF), 269–289 (TLMI…AVSP), 293–313 (VSLF…GVAM), 331–351 (LGIA…VVGI), and 356–376 (MLIG…MFVA).

The protein belongs to the major facilitator superfamily. DHA1 family. MdtL (TC 2.A.1.2.22) subfamily.

It localises to the cell inner membrane. Functionally, confers resistance to chloramphenicol. The sequence is that of Multidrug resistance protein MdtL from Escherichia coli (strain SMS-3-5 / SECEC).